The sequence spans 1085 residues: DNA mismatch repair protein MutS (1085 aa).

Positions 533–564 are disordered; it reads DEDLFGEEEQNAPPVGSSNHAVGTQPSADDEA. A compositionally biased stretch (polar residues) spans 548-559; the sequence is GSSNHAVGTQPS. 812 to 819 contributes to the ATP binding site; sequence GPNMSGKS. A disordered region spans residues 997–1042; the sequence is ERRAPRSAPPTVPARGDDRRSAGRASSSGAGAARGEQGRTLPDGQL. The segment covering 1019–1031 has biased composition (low complexity); it reads GRASSSGAGAARG.

This sequence belongs to the DNA mismatch repair MutS family.

This protein is involved in the repair of mismatches in DNA. It is possible that it carries out the mismatch recognition step. This protein has a weak ATPase activity. This chain is DNA mismatch repair protein MutS, found in Roseiflexus sp. (strain RS-1).